The chain runs to 436 residues: Trigger factor (436 aa).

Residues 161 to 246 form the PPIase FKBP-type domain; it reads GDQLNIDFVG…VNSVSEAELP (86 aa).

The protein belongs to the FKBP-type PPIase family. Tig subfamily.

Its subcellular location is the cytoplasm. It carries out the reaction [protein]-peptidylproline (omega=180) = [protein]-peptidylproline (omega=0). Functionally, involved in protein export. Acts as a chaperone by maintaining the newly synthesized protein in an open conformation. Functions as a peptidyl-prolyl cis-trans isomerase. The sequence is that of Trigger factor from Azotobacter vinelandii (strain DJ / ATCC BAA-1303).